We begin with the raw amino-acid sequence, 497 residues long: Glutamate--tRNA ligase (497 aa).

Positions 13-23 match the 'HIGH' region motif; sequence PSPTGDPHVGT. A 'KMSKS' region motif is present at residues 253 to 257; that stretch reads KISKR. ATP is bound at residue Lys256.

Belongs to the class-I aminoacyl-tRNA synthetase family. Glutamate--tRNA ligase type 1 subfamily. In terms of assembly, monomer.

It localises to the cytoplasm. It catalyses the reaction tRNA(Glu) + L-glutamate + ATP = L-glutamyl-tRNA(Glu) + AMP + diphosphate. Its function is as follows. Catalyzes the attachment of glutamate to tRNA(Glu) in a two-step reaction: glutamate is first activated by ATP to form Glu-AMP and then transferred to the acceptor end of tRNA(Glu). This Cutibacterium acnes (strain DSM 16379 / KPA171202) (Propionibacterium acnes) protein is Glutamate--tRNA ligase.